Here is a 260-residue protein sequence, read N- to C-terminus: Neurotrophin-3 (260 aa).

Positions 1-18 (MSILFYVMFLPYLCGIHA) are cleaved as a signal peptide. A propeptide spanning residues 19-141 (TNMDKRNLPE…VNNRTSRRKR (123 aa)) is cleaved from the precursor. N-linked (GlcNAc...) asparagine glycosylation is present at asparagine 134. 3 disulfides stabilise this stretch: cysteine 155–cysteine 220, cysteine 198–cysteine 249, and cysteine 208–cysteine 251.

The protein belongs to the NGF-beta family.

Its subcellular location is the secreted. Seems to promote the survival of visceral and proprioceptive sensory neurons. This Xenopus laevis (African clawed frog) protein is Neurotrophin-3 (ntf3).